The primary structure comprises 78 residues: Consomatin Te1 (78 aa).

The first 22 residues, 1 to 22 (MQTAYWMMVMMMVWITAPLSEG), serve as a signal peptide directing secretion. The propeptide occupies 23–56 (GQLNDVIRGLVPDNLAPQLVLQSLDSRRHPHGIR). Cysteine 63 and cysteine 68 are disulfide-bonded. Tryptophan 65 is modified (D-tryptophan). Proline 69, proline 70, and proline 72 each carry 4-hydroxyproline. Positions 74 to 78 (RRLGS) are excised as a propeptide.

It belongs to the conotoxin C superfamily. Consomatin family. In terms of tissue distribution, expressed by the venom duct.

The protein resides in the secreted. In terms of biological role, moderately activates human somatostatin receptors (SSTR) with a preferential activation of SSTR1 and SSTR4. In vivo, does not cause behavioral changes in mice within a few minutes of intracranial injection, but causes a progressive loss of movement thereafter. Four to five hours after injection, mice recover, even with the highest dose tested. Shows antinociception and antihyperalgesia activities in two mouse models of acute pain, most probably by acting outside the central nervous system. The polypeptide is Consomatin Te1 (Conus terebra (Sea snail)).